A 623-amino-acid polypeptide reads, in one-letter code: DNA-directed RNA polymerase subunit beta' (623 aa).

Zn(2+) is bound by residues Cys70, Cys72, Cys85, and Cys88. Asp466, Asp468, and Asp470 together coordinate Mg(2+).

The protein belongs to the RNA polymerase beta' chain family. RpoC1 subfamily. In terms of assembly, in plastids the minimal PEP RNA polymerase catalytic core is composed of four subunits: alpha, beta, beta', and beta''. When a (nuclear-encoded) sigma factor is associated with the core the holoenzyme is formed, which can initiate transcription. Mg(2+) serves as cofactor. It depends on Zn(2+) as a cofactor.

The protein resides in the plastid. The protein localises to the chloroplast. The enzyme catalyses RNA(n) + a ribonucleoside 5'-triphosphate = RNA(n+1) + diphosphate. DNA-dependent RNA polymerase catalyzes the transcription of DNA into RNA using the four ribonucleoside triphosphates as substrates. The protein is DNA-directed RNA polymerase subunit beta' of Guillardia theta (Cryptophyte).